A 465-amino-acid chain; its full sequence is GTPase Der (465 aa).

EngA-type G domains follow at residues 3–166 (FLVA…LNEY) and 184–358 (IHFS…ACAS). Residues 9 to 16 (GRANVGKS), 56 to 60 (DTGGI), 118 to 121 (NKVD), 190 to 197 (GRPNVGKS), 237 to 241 (DTAGV), and 302 to 305 (NKWD) each bind GTP. Residues 359–443 (KKITTADATR…PIVFEFKQSE (85 aa)) form the KH-like domain. Residues 446 to 465 (FADRKNKRSKDEGSKSKKVK) are disordered.

This sequence belongs to the TRAFAC class TrmE-Era-EngA-EngB-Septin-like GTPase superfamily. EngA (Der) GTPase family. As to quaternary structure, associates with the 50S ribosomal subunit.

Its function is as follows. GTPase that plays an essential role in the late steps of ribosome biogenesis. In Francisella tularensis subsp. tularensis (strain FSC 198), this protein is GTPase Der.